Here is a 354-residue protein sequence, read N- to C-terminus: Ubiquitin-conjugating enzyme E2 Z (354 aa).

The tract at residues 1–21 (MAESPTEEAATAGAGAAGPGA) is disordered. The UBC core domain occupies 99–253 (QCLLRIKRDI…IRHETIRVAV (155 aa)). Catalysis depends on Cys188, which acts as the Glycyl thioester intermediate. The segment at 332–354 (NAEMDSDSSSSGTETDLHGSLRV) is disordered. Ser337 is subject to Phosphoserine.

Belongs to the ubiquitin-conjugating enzyme family. As to expression, widely expressed. Highly in placenta, pancreas, spleen and testis.

It localises to the cytoplasm. It is found in the nucleus. It carries out the reaction S-ubiquitinyl-[E1 ubiquitin-activating enzyme]-L-cysteine + [E2 ubiquitin-conjugating enzyme]-L-cysteine = [E1 ubiquitin-activating enzyme]-L-cysteine + S-ubiquitinyl-[E2 ubiquitin-conjugating enzyme]-L-cysteine.. Its pathway is protein modification; protein ubiquitination. Functionally, catalyzes the covalent attachment of ubiquitin to other proteins. Specific substrate for UBA6, not charged with ubiquitin by UBE1. May be involved in apoptosis regulation. This Homo sapiens (Human) protein is Ubiquitin-conjugating enzyme E2 Z (UBE2Z).